A 1102-amino-acid polypeptide reads, in one-letter code: Carbamoyl phosphate synthase large chain (1102 aa).

The interval 1–408 (MPKRTDIQSV…AFQKALRSLE (408 aa)) is carboxyphosphate synthetic domain. ATP contacts are provided by R129, R175, G181, G182, E214, I216, E221, G247, V248, H249, Q291, and E305. Positions 137-334 (EEVRKKIGHG…IAKIAAKLAV (198 aa)) constitute an ATP-grasp 1 domain. Mg(2+) is bound by residues Q291, E305, and N307. Residues Q291, E305, and N307 each contribute to the Mn(2+) site. The interval 409–551 (KKGSQFTFVG…YFYSSYDEES (143 aa)) is oligomerization domain. The tract at residues 552–954 (EVAPREKPAV…AYAKSQAGAY (403 aa)) is carbamoyl phosphate synthetic domain. In terms of domain architecture, ATP-grasp 2 spans 682–873 (GRVLAEAGLP…LAKAAARISL (192 aa)). The ATP site is built by R718, R757, L759, E764, G789, I790, H791, S792, Q832, and E844. Mg(2+) is bound by residues Q832, E844, and N846. Positions 832, 844, and 846 each coordinate Mn(2+). The region spanning 955–1100 (GPLPTKGRAF…QEHAAFLIAA (146 aa)) is the MGS-like domain. Residues 955 to 1102 (GPLPTKGRAF…HAAFLIAARD (148 aa)) form an allosteric domain region.

This sequence belongs to the CarB family. Composed of two chains; the small (or glutamine) chain promotes the hydrolysis of glutamine to ammonia, which is used by the large (or ammonia) chain to synthesize carbamoyl phosphate. Tetramer of heterodimers (alpha,beta)4. It depends on Mg(2+) as a cofactor. Mn(2+) serves as cofactor.

The enzyme catalyses hydrogencarbonate + L-glutamine + 2 ATP + H2O = carbamoyl phosphate + L-glutamate + 2 ADP + phosphate + 2 H(+). It catalyses the reaction hydrogencarbonate + NH4(+) + 2 ATP = carbamoyl phosphate + 2 ADP + phosphate + 2 H(+). It functions in the pathway amino-acid biosynthesis; L-arginine biosynthesis; carbamoyl phosphate from bicarbonate: step 1/1. Its pathway is pyrimidine metabolism; UMP biosynthesis via de novo pathway; (S)-dihydroorotate from bicarbonate: step 1/3. Functionally, large subunit of the glutamine-dependent carbamoyl phosphate synthetase (CPSase). CPSase catalyzes the formation of carbamoyl phosphate from the ammonia moiety of glutamine, carbonate, and phosphate donated by ATP, constituting the first step of 2 biosynthetic pathways, one leading to arginine and/or urea and the other to pyrimidine nucleotides. The large subunit (synthetase) binds the substrates ammonia (free or transferred from glutamine from the small subunit), hydrogencarbonate and ATP and carries out an ATP-coupled ligase reaction, activating hydrogencarbonate by forming carboxy phosphate which reacts with ammonia to form carbamoyl phosphate. The protein is Carbamoyl phosphate synthase large chain of Streptomyces coelicolor (strain ATCC BAA-471 / A3(2) / M145).